Here is a 65-residue protein sequence, read N- to C-terminus: Translational regulator CsrA (65 aa).

The protein belongs to the CsrA/RsmA family. Homodimer; the beta-strands of each monomer intercalate to form a hydrophobic core, while the alpha-helices form wings that extend away from the core.

It localises to the cytoplasm. Functionally, a translational regulator that binds mRNA to regulate translation initiation and/or mRNA stability. Usually binds in the 5'-UTR at or near the Shine-Dalgarno sequence preventing ribosome-binding, thus repressing translation. Its main target seems to be the major flagellin gene, while its function is anatagonized by FliW. The polypeptide is Translational regulator CsrA (Bordetella petrii (strain ATCC BAA-461 / DSM 12804 / CCUG 43448)).